A 913-amino-acid chain; its full sequence is Protein SEY1 homolog (913 aa).

Topologically, residues 1–825 are cytoplasmic; sequence MTDVNKTQII…ETGGHMSLKN (825 aa). A GB1/RHD3-type G domain is found at 33-288; that stretch reads GFNYNVIAIL…IPADGFAQYC (256 aa). 43 to 50 provides a ligand contact to GTP; sequence GSQSSGKS. Residues 826-846 traverse the membrane as a helical segment; it reads VPFAFWVILLILGWNEILMFT. The Lumenal portion of the chain corresponds to 847 to 849; that stretch reads RLF. Residues 850-870 traverse the membrane as a helical segment; that stretch reads FRLNIILPMLIGFIIIVISCL. Over 871 to 913 the chain is Cytoplasmic; it reads YTGNAQILSYINKIIFIVIKNLYNFYKHLQTIGHQTTKPEKVE.

It belongs to the TRAFAC class dynamin-like GTPase superfamily. GB1/RHD3 GTPase family. RHD3 subfamily.

Its subcellular location is the endoplasmic reticulum membrane. Probable GTP-binding protein involved in generating and maintaining the structure of the tubular endoplasmic reticulum network. The sequence is that of Protein SEY1 homolog from Plasmodium berghei (strain Anka).